We begin with the raw amino-acid sequence, 418 residues long: Bifunctional protein GlmU (418 aa).

The pyrophosphorylase stretch occupies residues M1 to R236. UDP-N-acetyl-alpha-D-glucosamine is bound by residues L7–G10, K21, Q74, G79–T80, Y102–D104, G141, E155, N170, and N234. D104 contacts Mg(2+). N234 contributes to the Mg(2+) binding site. The linker stretch occupies residues V237–A257. The tract at residues G258–Q418 is N-acetyltransferase. UDP-N-acetyl-alpha-D-glucosamine-binding residues include R339 and K357. H369 (proton acceptor) is an active-site residue. UDP-N-acetyl-alpha-D-glucosamine is bound at residue Y372. A386 lines the acetyl-CoA pocket.

This sequence in the N-terminal section; belongs to the N-acetylglucosamine-1-phosphate uridyltransferase family. In the C-terminal section; belongs to the transferase hexapeptide repeat family. Homotrimer. It depends on Mg(2+) as a cofactor.

The protein localises to the cytoplasm. It carries out the reaction alpha-D-glucosamine 1-phosphate + acetyl-CoA = N-acetyl-alpha-D-glucosamine 1-phosphate + CoA + H(+). The catalysed reaction is N-acetyl-alpha-D-glucosamine 1-phosphate + UTP + H(+) = UDP-N-acetyl-alpha-D-glucosamine + diphosphate. The protein operates within nucleotide-sugar biosynthesis; UDP-N-acetyl-alpha-D-glucosamine biosynthesis; N-acetyl-alpha-D-glucosamine 1-phosphate from alpha-D-glucosamine 6-phosphate (route II): step 2/2. It functions in the pathway nucleotide-sugar biosynthesis; UDP-N-acetyl-alpha-D-glucosamine biosynthesis; UDP-N-acetyl-alpha-D-glucosamine from N-acetyl-alpha-D-glucosamine 1-phosphate: step 1/1. Its pathway is bacterial outer membrane biogenesis; LPS lipid A biosynthesis. In terms of biological role, catalyzes the last two sequential reactions in the de novo biosynthetic pathway for UDP-N-acetylglucosamine (UDP-GlcNAc). The C-terminal domain catalyzes the transfer of acetyl group from acetyl coenzyme A to glucosamine-1-phosphate (GlcN-1-P) to produce N-acetylglucosamine-1-phosphate (GlcNAc-1-P), which is converted into UDP-GlcNAc by the transfer of uridine 5-monophosphate (from uridine 5-triphosphate), a reaction catalyzed by the N-terminal domain. The polypeptide is Bifunctional protein GlmU (Cutibacterium acnes (strain DSM 16379 / KPA171202) (Propionibacterium acnes)).